Reading from the N-terminus, the 331-residue chain is Olfactory receptor 6S1 (331 aa).

Residues 1-29 (MSPDGNHSSDPTEFVLAGLPNLNSARVEL) lie on the Extracellular side of the membrane. The N-linked (GlcNAc...) asparagine glycan is linked to N6. The chain crosses the membrane as a helical span at residues 30–50 (FSVFLLVYLLNLTGNVLIVGV). Residues 51–59 (VRADTRLQT) lie on the Cytoplasmic side of the membrane. A helical transmembrane segment spans residues 60–80 (PMYFFLGNLSCLEILLTSVII). Residues 81–99 (PKMLSNFLSRQHTISFAAC) lie on the Extracellular side of the membrane. C99 and C182 form a disulfide bridge. Residues 100 to 120 (ITQFYFYFFLGASEFLLLAVM) form a helical membrane-spanning segment. The Cytoplasmic portion of the chain corresponds to 121-147 (SADRYLAICHPLRYPLLMSGAVCFRVA). Residues 148-168 (LACWVGGLVPVLGPTVAVALL) traverse the membrane as a helical segment. The Extracellular portion of the chain corresponds to 169 to 207 (PFCKQGAVVQHFFCDSGPLLRLACTNTKKLEETDFVLAS). The chain crosses the membrane as a helical span at residues 208–228 (LVIVSSLLITAVSYGLIVLAV). Topologically, residues 229 to 242 (LSIPSASGRQKAFS) are cytoplasmic. The helical transmembrane segment at 243–263 (TCTSHLIVVTLFYGSAIFLYV) threads the bilayer. The Extracellular portion of the chain corresponds to 264–274 (RPSQSGSVDTN). The chain crosses the membrane as a helical span at residues 275–295 (WAVTVITTFVTPLLNPFIYAL). Topologically, residues 296-331 (RNEQVKEALKDMFRKVVAGVLGNLLLDKCLSEKAVK) are cytoplasmic.

Belongs to the G-protein coupled receptor 1 family.

It is found in the cell membrane. Odorant receptor. The sequence is that of Olfactory receptor 6S1 (OR6S1) from Homo sapiens (Human).